Consider the following 491-residue polypeptide: Ketol-acid reductoisomerase (NADP(+)) (491 aa).

Positions 15–208 (AQLGKCRFMG…GGHRAGVLES (194 aa)) constitute a KARI N-terminal Rossmann domain. NADP(+) contacts are provided by residues 45 to 48 (CGAQ), arginine 68, arginine 76, serine 78, and 108 to 110 (DKQ). Residue histidine 132 is part of the active site. NADP(+) is bound at residue glycine 158. 2 consecutive KARI C-terminal knotted domains span residues 209–344 (SFVA…TAPQ) and 345–484 (YEGK…MTDM). Aspartate 217, glutamate 221, glutamate 389, and glutamate 393 together coordinate Mg(2+). Substrate is bound at residue serine 414.

It belongs to the ketol-acid reductoisomerase family. The cofactor is Mg(2+).

It catalyses the reaction (2R)-2,3-dihydroxy-3-methylbutanoate + NADP(+) = (2S)-2-acetolactate + NADPH + H(+). The catalysed reaction is (2R,3R)-2,3-dihydroxy-3-methylpentanoate + NADP(+) = (S)-2-ethyl-2-hydroxy-3-oxobutanoate + NADPH + H(+). Its pathway is amino-acid biosynthesis; L-isoleucine biosynthesis; L-isoleucine from 2-oxobutanoate: step 2/4. It participates in amino-acid biosynthesis; L-valine biosynthesis; L-valine from pyruvate: step 2/4. In terms of biological role, involved in the biosynthesis of branched-chain amino acids (BCAA). Catalyzes an alkyl-migration followed by a ketol-acid reduction of (S)-2-acetolactate (S2AL) to yield (R)-2,3-dihydroxy-isovalerate. In the isomerase reaction, S2AL is rearranged via a Mg-dependent methyl migration to produce 3-hydroxy-3-methyl-2-ketobutyrate (HMKB). In the reductase reaction, this 2-ketoacid undergoes a metal-dependent reduction by NADPH to yield (R)-2,3-dihydroxy-isovalerate. This Escherichia coli O157:H7 protein is Ketol-acid reductoisomerase (NADP(+)).